Here is a 377-residue protein sequence, read N- to C-terminus: Geranylgeranyl transferase type-1 subunit beta (377 aa).

4 PFTB repeats span residues 144-186 (KEAC…YMLN), 193-234 (MKKA…CLMG), 245-284 (LNRI…KLLK), and 291-333 (FEKN…SLME). Geranylgeranyl diphosphate-binding positions include 219–221 (HGG) and 263–266 (RPNK). Aspartate 269 and cysteine 271 together coordinate Zn(2+). Geranylgeranyl diphosphate is bound at residue 272 to 275 (YSFW). Residue histidine 321 coordinates Zn(2+).

This sequence belongs to the protein prenyltransferase subunit beta family. Heterodimer of FNTA and PGGT1B. PGGT1B mediates interaction with substrate peptides. Requires Zn(2+) as cofactor. Mg(2+) serves as cofactor.

It carries out the reaction geranylgeranyl diphosphate + L-cysteinyl-[protein] = S-geranylgeranyl-L-cysteinyl-[protein] + diphosphate. Catalyzes the transfer of a geranyl-geranyl moiety from geranyl-geranyl pyrophosphate to a cysteine at the fourth position from the C-terminus of proteins having the C-terminal sequence Cys-aliphatic-aliphatic-X. Known substrates include RAC1, RAC2, RAP1A and RAP1B. The chain is Geranylgeranyl transferase type-1 subunit beta (PGGT1B) from Bos taurus (Bovine).